Here is a 649-residue protein sequence, read N- to C-terminus: Outer dense fiber protein 2 (649 aa).

Positions 1-65 are disordered; sequence MKNRSPSPPL…TKVPWIPPGK (65 aa). 3 coiled-coil regions span residues 137-219, 247-426, and 464-649; these read QKRE…AETD, DINL…LEML, and EVAV…NCAL. Residues 339–358 form a disordered region; the sequence is SEVSKSIESTKAHLQGQLRT.

The protein belongs to the ODF2 family. Self-associates. Associates with microtubules and forms a fibrillar structure partially linked to the microtubule network.

The protein localises to the cytoplasm. The protein resides in the cytoskeleton. It is found in the microtubule organizing center. Its subcellular location is the centrosome. It localises to the cell projection. The protein localises to the cilium. The protein resides in the centriole. It is found in the spindle pole. Its subcellular location is the flagellum. Seems to be a major form of sperm tail outer dense fibers. In Xenopus laevis (African clawed frog), this protein is Outer dense fiber protein 2 (odf2).